The primary structure comprises 170 residues: NADH-quinone oxidoreductase subunit B (170 aa).

Positions 42, 43, 107, and 136 each coordinate [4Fe-4S] cluster.

The protein belongs to the complex I 20 kDa subunit family. In terms of assembly, NDH-1 is composed of 14 different subunits. Subunits NuoB, C, D, E, F, and G constitute the peripheral sector of the complex. [4Fe-4S] cluster is required as a cofactor.

Its subcellular location is the cell inner membrane. It carries out the reaction a quinone + NADH + 5 H(+)(in) = a quinol + NAD(+) + 4 H(+)(out). NDH-1 shuttles electrons from NADH, via FMN and iron-sulfur (Fe-S) centers, to quinones in the respiratory chain. The immediate electron acceptor for the enzyme in this species is believed to be ubiquinone. Couples the redox reaction to proton translocation (for every two electrons transferred, four hydrogen ions are translocated across the cytoplasmic membrane), and thus conserves the redox energy in a proton gradient. In Campylobacter curvus (strain 525.92), this protein is NADH-quinone oxidoreductase subunit B.